A 683-amino-acid polypeptide reads, in one-letter code: MADKKNLLLLFDHPTEPVFMDKGGNGTVFDVPDSYVTDRYNQMCKKVQRRVSSASEKNVQVKEIAIPDLSCSMRLGRSEQFSIFLKSHRKMASHLIEIFTKMQTVDELQSVAVYARDRVNPVLFNYALSVALLHRPDTKDLELPAFAQTFPDRFIDSKMLRSMREESFVVERSAARLPVVSSVKYTASDLDVEHRLWYFREDLGVNLHHWHWHLVYPIEAPDRSIVDKDRRGELFYYMHQQIIARYNAERLSNHMARVQPFNNLDEPIAEGYFPKMDSLVASRAYPPRFDNTRLSDVDRPNNQLRVGIDDMKRWRERIYEAIHQGYVLDTNNEKIVLDDAKGIDILGNIIEASDLTPNSTLYGDFHNMGHILIAYSHDPTNKHLEYAGVMGDASTAMRDPIFYKWHAFIDNMFQEHKRLLSPYEKQELSFPDVRVESIQVESQGQVNRLTTFWQESDVDMSRGLDFVPRGHVLARFTHLQHHEFSYTIKVENSSEATRYGYVRIFLAPKLDDRNAPMLLEQQRLMMVELDKFVVTMPPGSHTITRNSTESSVTIPFERTFRNLDKLEELQNFLCGCGWPQHMLIPKGRPEGLRFELFVMVSNYEEDKVDQTVADCGCSIAASYCGLRDRLYPDRKSMGFPFDRKPRRGSEILENFLTPNMCAVEVIITHEDRTEKLREVPARS.

Residues 1-48 (MADKKNLLLLFDHPTEPVFMDKGGNGTVFDVPDSYVTDRYNQMCKKVQ) constitute a propeptide that is removed on maturation. Residues His-209, His-213, and His-239 each coordinate Cu cation. Glu-351 functions as the Proton acceptor in the catalytic mechanism. N-linked (GlcNAc...) asparagine glycosylation occurs at Asn-358. 3 residues coordinate Cu cation: His-366, His-370, and His-406. N-linked (GlcNAc...) asparagine glycans are attached at residues Asn-492 and Asn-546. Cystine bridges form between Cys-574/Cys-617 and Cys-576/Cys-624.

It belongs to the tyrosinase family. Cu(2+) is required as a cofactor. Post-translationally, upon activation, a trypsin type protease cleaves prophenol oxidase to yield the active enzyme.

It localises to the secreted. The catalysed reaction is 2 L-dopa + O2 = 2 L-dopaquinone + 2 H2O. It catalyses the reaction L-tyrosine + O2 = L-dopaquinone + H2O. Its function is as follows. This is a copper-containing oxidase that functions in the formation of pigments such as melanins and other polyphenolic compounds. Catalyzes the rate-limiting conversions of tyrosine to DOPA, DOPA to DOPA-quinone and possibly 5,6 dihydroxyindole to indole-5'6 quinone. The protein is Phenoloxidase 3 (PPO3) of Drosophila melanogaster (Fruit fly).